A 1106-amino-acid polypeptide reads, in one-letter code: Solute carrier family 12 member 7 (1106 aa).

Residues 1–143 are Cytoplasmic-facing; that stretch reads MVYTALTWQR…PRESKAPCMG (143 aa). Residues 17–83 form a disordered region; sequence GLVPSHLPQE…SPFIGSAAAD (67 aa). 2 positions are modified to phosphoserine: Ser-74 and Ser-86. A discontinuously helical transmembrane segment spans residues 144-166; it reads TFIGVYLPCLQNILGVILFLRLT. 2 residues coordinate K(+): Asn-155 and Ile-156. Residue Val-159 participates in chloride binding. At 167–173 the chain is on the extracellular side; that stretch reads WIVGAAG. A helical membrane pass occupies residues 174 to 196; it reads VLESFLVVSMCCTCTMLTAVSMS. Topologically, residues 197 to 220 are cytoplasmic; that stretch reads AIATNGVVPAGGSYYMISRSLGPE. A helical membrane pass occupies residues 221 to 249; sequence FGGAVGLCFYLGTTFAGAMYILGTIEIFL. At 250 to 273 the chain is on the extracellular side; that stretch reads TYISPGAAVFQAETPEGEAAALLH. 2 helical membrane-spanning segments follow: residues 274-295 and 296-324; these read NMRV…VGVK and YVNK…KTAF. The Extracellular segment spans residues 325–443; sequence DPPDIPVCLL…PYVLSDITTY (119 aa). Asn-336, Asn-355, and Asn-384 each carry an N-linked (GlcNAc...) asparagine glycan. A helical transmembrane segment spans residues 444-464; sequence FTVLVGIYFPSVTGIMAGSNR. Pro-453 and Thr-456 together coordinate K(+). Position 453 (Pro-453) interacts with chloride. Residues Gly-457 and Ile-458 each contribute to the chloride site. Residues 465 to 474 are Cytoplasmic-facing; that stretch reads SGDLKDAQKS. The chain crosses the membrane as a helical span at residues 475-497; the sequence is IPTGTILAIVTTSFIYLSCIVLF. Residues 498 to 528 lie on the Extracellular side of the membrane; the sequence is GACIEGVVLRDKFGEALQGNLVIGMLAWPSP. The chain crosses the membrane as a helical span at residues 529-555; it reads WVIVIGSFFSTCGAGLQSLTGAPRLLQ. The Cytoplasmic portion of the chain corresponds to 556-578; the sequence is AIARDGIVPFLQVFGHGKANGEP. 2 helical membrane-spanning segments follow: residues 579–597 and 598–622; these read TWAL…LIAS and LDSV…ACAV. Residue Tyr-613 coordinates chloride. Residues 623–636 lie on the Cytoplasmic side of the membrane; the sequence is QTLLRTPNWRPRFK. A run of 2 helical transmembrane segments spans residues 637 to 659 and 660 to 675; these read YYHW…ICSW and YYAL…IYKY. Topologically, residues 676 to 1106 are cytoplasmic; that stretch reads IEYRGAEKEW…GGREVITIYS (431 aa). The tract at residues 688 to 704 is scissor helix; the sequence is GIRGLSLNAARYALLRV. The segment at 980 to 999 is disordered; it reads RNTASHTAASRAQAPPTPDK. Residues Thr-996 and Thr-1003 each carry the phosphothreonine modification.

The protein belongs to the SLC12A transporter family. K/Cl co-transporter subfamily. Homodimer; adopts a domain-swap conformation at the scissor helices connecting the transmembrane domain and C-terminal domain. Heterodimer with K-Cl cotransporter SLC12A5. In terms of tissue distribution, widely expressed. Higher levels in heart, kidney and lung (at protein level).

Its subcellular location is the cell membrane. It catalyses the reaction K(+)(in) + chloride(in) = K(+)(out) + chloride(out). With respect to regulation, activated by N-ethylmaleimide (NEM). Inhibited by furosemide, DIDS and bumetanide. The inhibition is much stronger in the presence of 50 mM K(+) in the uptake medium. Inhibited by DIOA. Inhibited by WNK3. Functionally, mediates electroneutral potassium-chloride cotransport when activated by cell swelling. May mediate K(+) uptake into Deiters' cells in the cochlea and contribute to K(+) recycling in the inner ear. Important for the survival of cochlear outer and inner hair cells and the maintenance of the organ of Corti. May be required for basolateral Cl(-) extrusion in the kidney and contribute to renal acidification. The chain is Solute carrier family 12 member 7 from Oryctolagus cuniculus (Rabbit).